We begin with the raw amino-acid sequence, 549 residues long: Formate--tetrahydrofolate ligase (549 aa).

60–67 (TPYGEGKT) contributes to the ATP binding site.

The protein belongs to the formate--tetrahydrofolate ligase family.

It catalyses the reaction (6S)-5,6,7,8-tetrahydrofolate + formate + ATP = (6R)-10-formyltetrahydrofolate + ADP + phosphate. It participates in one-carbon metabolism; tetrahydrofolate interconversion. The protein is Formate--tetrahydrofolate ligase of Campylobacter concisus (strain 13826).